The chain runs to 423 residues: uncharacterized protein (423 aa).

The protein belongs to the asfivirus E423R family.

It localises to the virion. This is an uncharacterized protein from African swine fever virus (isolate Tick/Malawi/Lil 20-1/1983) (ASFV).